The primary structure comprises 367 residues: Putative F-box protein At4g10190 (367 aa).

One can recognise an F-box domain in the interval 3-53 (KRNIVDLPEDLVMEILARVPTVTLVRLQSTSKRWNVLIEDKRFAEQHFTNA).

This chain is Putative F-box protein At4g10190, found in Arabidopsis thaliana (Mouse-ear cress).